Consider the following 174-residue polypeptide: Protein VdlD (174 aa).

Residues 20–132 (DRTKLLMSYL…YFTMVAVENG (113 aa)) enclose the HotDog ACOT-type domain.

It belongs to the acyl coenzyme A hydrolase family.

The chain is Protein VdlD (vdlD) from Helicobacter pylori (strain J99 / ATCC 700824) (Campylobacter pylori J99).